Consider the following 301-residue polypeptide: Polynucleotide kinase (301 aa).

As to quaternary structure, homotetramer. Mg(2+) is required as a cofactor.

The catalysed reaction is a 5'-end dephospho-2'-deoxyribonucleoside-DNA + ATP = a 5'-end 5'-phospho-2'-deoxyribonucleoside-DNA + ADP + H(+). It carries out the reaction a 2'-deoxyribonucleoside 3'-phosphate + H2O = a 2'-deoxyribonucleoside + phosphate. In terms of biological role, acts as a 5'-hydroxyl kinase, a 3'-phosphatase and a 2',3'-cyclic phosphodiesterase. Catalyzes the transfer of the terminal phosphate of ATP to the 5'-hydroxyl termini of ribo- and deoxyribonucleotides. In the presence of ADP the enzyme also catalyzes an exchange reaction. In the exchange reaction, an excess ADP causes the enzyme to transfer the 5' terminal phosphate from phosphorylated DNA to ADP. Involved in countering a host defense mechanism which activates T4-induced anticodon nuclease and shuts off viral translation. The polynucleotide kinase modifies the ends of nicked tRNA generated by the antiviral response of the host bacteria and facilitates repair by T4 RNA ligase. The protein is Polynucleotide kinase (pseT) of Escherichia coli (Bacteriophage T4).